We begin with the raw amino-acid sequence, 278 residues long: Fasciclin-like arabinogalactan protein 5 (278 aa).

An N-terminal signal peptide occupies residues Met-1 to Ala-24. An FAS1 domain is found at Asn-25–Ile-169. N-linked (GlcNAc...) asparagine glycosylation is found at Asn-26, Asn-74, Asn-126, and Asn-159. Residues Val-199–Ser-257 form a disordered region. The span at Ala-224–Ala-239 shows a compositional bias: low complexity. Basic and acidic residues predominate over residues Asp-240–Lys-251. Ser-255 is lipidated: GPI-anchor amidated serine. Positions Ala-256–Phe-278 are cleaved as a propeptide — removed in mature form.

It belongs to the fasciclin-like AGP family.

Its subcellular location is the cell membrane. May be a cell surface adhesion protein. The chain is Fasciclin-like arabinogalactan protein 5 (FLA5) from Arabidopsis thaliana (Mouse-ear cress).